The following is a 696-amino-acid chain: Polyribonucleotide nucleotidyltransferase (696 aa).

D489 and D495 together coordinate Mg(2+). The KH domain maps to P556–I615. One can recognise an S1 motif domain in the interval G625–K693.

It belongs to the polyribonucleotide nucleotidyltransferase family. Component of the RNA degradosome, which is a multiprotein complex involved in RNA processing and mRNA degradation. Mg(2+) is required as a cofactor.

The protein localises to the cytoplasm. It catalyses the reaction RNA(n+1) + phosphate = RNA(n) + a ribonucleoside 5'-diphosphate. Its function is as follows. Involved in mRNA degradation. Catalyzes the phosphorolysis of single-stranded polyribonucleotides processively in the 3'- to 5'-direction. The sequence is that of Polyribonucleotide nucleotidyltransferase from Coxiella burnetii (strain CbuK_Q154) (Coxiella burnetii (strain Q154)).